Consider the following 258-residue polypeptide: Putative phosphoenolpyruvate synthase regulatory protein (258 aa).

146 to 153 contributes to the ADP binding site; sequence GVSRVGKT.

This sequence belongs to the pyruvate, phosphate/water dikinase regulatory protein family. PSRP subfamily.

It carries out the reaction [pyruvate, water dikinase] + ADP = [pyruvate, water dikinase]-phosphate + AMP + H(+). The catalysed reaction is [pyruvate, water dikinase]-phosphate + phosphate + H(+) = [pyruvate, water dikinase] + diphosphate. Bifunctional serine/threonine kinase and phosphorylase involved in the regulation of the phosphoenolpyruvate synthase (PEPS) by catalyzing its phosphorylation/dephosphorylation. This is Putative phosphoenolpyruvate synthase regulatory protein from Thiobacillus denitrificans (strain ATCC 25259 / T1).